We begin with the raw amino-acid sequence, 776 residues long: MRQNYDDRKIVKQYREIARQIVKKEGLYKNMEQAELCEQTNFWREKFKTKPMTDRDKINIFALAREAASRIIGLDAVVVQLIGALVLGDGKVAEMKTGEGKTLMSLFVMFIEVMRGNRVHLVTANEYLARRDREEIGQVLEYLGVSVALNESGLDIAQKKAIYTADVIYGTASEFGFDYLRDNMVRQKEDKVQSGLDFVLIDEADSILIDEARTPLLISDRKEEDLSLYHTANKLVKKMMKDDYEMEEHKRFVWLNDAGIEKAQKFWGVESLYSAEAQSELRITMLLMRAHFLMHKDKDYVVLDDEVLIIDPHTGRALPGRRFNDGLHQAIEAKEGVEVKEESRTLATITIQNYFRMYKKISGMTGTAKTEEEEFRQIYNMDVVVIPTNLRVNREDMQDDIFYTKKEKGRAIVYEVSWRYEKGQPTLIGTSSIKSNEWISGLLDAAGIPHQVLNAKNHAQEAEIIAKAGKRGMVTLATNMAGRGTDIKLDPDVHKLGGLAVIGTERHESRRIDLQLMGRSGRRGDPGFSKFMISLEDDLLEQFESKSWEKLSAKLKRKAPRDGKPVNSRKIHAVVVDAQKRLEGANYDIRKDLLSYDEVIDLQRKMVYKERDLLLERNKLGVSSEKILREVAEYSFIHPSDIPEEELEIYYSRQKELLGGTKFPISFDQVTLMEPREVVEEIVSWHKKERNKFPAETIAAIEREVYLNLMDQMWVMHLDAMVQLREGIHLRAYGQQDPLVMYQKEGAQLFEKFQADYHFYFAHALLELDPDGLIQG.

ATP is bound by residues glutamine 80, 98–102, and aspartate 486; that span reads GEGKT.

The protein belongs to the SecA family. In terms of assembly, monomer and homodimer. Part of the essential Sec protein translocation apparatus which comprises SecA, SecYEG and auxiliary proteins SecDF. Other proteins may also be involved.

It localises to the cell membrane. The protein localises to the cytoplasm. It catalyses the reaction ATP + H2O + cellular proteinSide 1 = ADP + phosphate + cellular proteinSide 2.. Part of the Sec protein translocase complex. Interacts with the SecYEG preprotein conducting channel. Has a central role in coupling the hydrolysis of ATP to the transfer of proteins into and across the cell membrane, serving as an ATP-driven molecular motor driving the stepwise translocation of polypeptide chains across the membrane. The polypeptide is Protein translocase subunit SecA 2 (Listeria monocytogenes serovar 1/2a (strain ATCC BAA-679 / EGD-e)).